Here is a 192-residue protein sequence, read N- to C-terminus: Large ribosomal subunit protein bL25 (192 aa).

This sequence belongs to the bacterial ribosomal protein bL25 family. CTC subfamily. In terms of assembly, part of the 50S ribosomal subunit; part of the 5S rRNA/L5/L18/L25 subcomplex. Contacts the 5S rRNA. Binds to the 5S rRNA independently of L5 and L18.

Functionally, this is one of the proteins that binds to the 5S RNA in the ribosome where it forms part of the central protuberance. The chain is Large ribosomal subunit protein bL25 from Solidesulfovibrio magneticus (strain ATCC 700980 / DSM 13731 / RS-1) (Desulfovibrio magneticus).